The sequence spans 179 residues: Acireductone dioxygenase (179 aa).

Fe(2+) contacts are provided by histidine 97, histidine 99, glutamate 103, and histidine 141. Positions 97, 99, 103, and 141 each coordinate Ni(2+).

The protein belongs to the acireductone dioxygenase (ARD) family. In terms of assembly, monomer. Fe(2+) serves as cofactor. Ni(2+) is required as a cofactor.

It carries out the reaction 1,2-dihydroxy-5-(methylsulfanyl)pent-1-en-3-one + O2 = 3-(methylsulfanyl)propanoate + CO + formate + 2 H(+). The catalysed reaction is 1,2-dihydroxy-5-(methylsulfanyl)pent-1-en-3-one + O2 = 4-methylsulfanyl-2-oxobutanoate + formate + 2 H(+). It functions in the pathway amino-acid biosynthesis; L-methionine biosynthesis via salvage pathway; L-methionine from S-methyl-5-thio-alpha-D-ribose 1-phosphate: step 5/6. Its function is as follows. Catalyzes 2 different reactions between oxygen and the acireductone 1,2-dihydroxy-3-keto-5-methylthiopentene (DHK-MTPene) depending upon the metal bound in the active site. Fe-containing acireductone dioxygenase (Fe-ARD) produces formate and 2-keto-4-methylthiobutyrate (KMTB), the alpha-ketoacid precursor of methionine in the methionine recycle pathway. Ni-containing acireductone dioxygenase (Ni-ARD) produces methylthiopropionate, carbon monoxide and formate, and does not lie on the methionine recycle pathway. The polypeptide is Acireductone dioxygenase (Gluconacetobacter diazotrophicus (strain ATCC 49037 / DSM 5601 / CCUG 37298 / CIP 103539 / LMG 7603 / PAl5)).